The primary structure comprises 154 residues: Egg-lysin (154 aa).

The first 18 residues, 1-18 (MKLLVLWVFAMMATVAMS), serve as a signal peptide directing secretion.

Monomer. Homodimer. Molecules associate into dimers and then rapidly dissociate again. Interacts (as a monomer) with the egg vitelline layer protein VERL (via VERL repeats); each VERL chain can bind multiple copies of lysin. As to expression, sperm.

Its subcellular location is the cytoplasmic vesicle. The protein resides in the secretory vesicle. It is found in the acrosome lumen. In terms of biological role, creates a 3 um hole in the egg vitelline layer through which the sperm passes. Does not have enzyme activity. Species-specific interaction between the sperm protein lysin and the egg protein VERL exposes a basic surface on lysin that may dissociate the egg vitelline layer via electrostatic repulsion. Plays a role in ensuring species-specific fertilization. This Haliotis fulgens (Green abalone) protein is Egg-lysin.